An 81-amino-acid chain; its full sequence is Conotoxin Vc6.13 (81 aa).

The N-terminal stretch at 1-19 is a signal peptide; it reads MEKLTILLLVAAVLMSIQA. Residues 20–44 constitute a propeptide that is removed on maturation; sequence LNQEQHQRAKINLLSKRKAPAERWW. 3 disulfides stabilise this stretch: Cys-49/Cys-63, Cys-56/Cys-67, and Cys-62/Cys-72.

Belongs to the conotoxin O2 superfamily. Expressed by the venom duct.

The protein localises to the secreted. Functionally, inhibits voltage-gated ion channels. In Conus victoriae (Queen Victoria cone), this protein is Conotoxin Vc6.13.